A 1402-amino-acid polypeptide reads, in one-letter code: Baculoviral IAP repeat-containing protein 1g (1402 aa).

BIR repeat units follow at residues 60–127 (EAKR…CEFL), 159–227 (EEAR…CEFL), and 278–345 (EELR…CVFL). Positions 315, 318, 335, and 342 each coordinate Zn(2+). Residues 464–759 (SVMCVEGEAG…EFLAAVRLTE (296 aa)) enclose the NACHT domain. Lysine 476 is a binding site for ATP.

Its function is as follows. Prevents motor-neuron apoptosis induced by a variety of signals. In Mus musculus (Mouse), this protein is Baculoviral IAP repeat-containing protein 1g (Naip7).